The sequence spans 331 residues: Pantothenate kinase (331 aa).

109–116 (GSVAVGKS) contributes to the ATP binding site.

The protein belongs to the prokaryotic pantothenate kinase family.

It localises to the cytoplasm. The enzyme catalyses (R)-pantothenate + ATP = (R)-4'-phosphopantothenate + ADP + H(+). The protein operates within cofactor biosynthesis; coenzyme A biosynthesis; CoA from (R)-pantothenate: step 1/5. The polypeptide is Pantothenate kinase (Sinorhizobium fredii (strain NBRC 101917 / NGR234)).